Here is a 587-residue protein sequence, read N- to C-terminus: Polyadenylate-binding protein-interacting protein 3 (587 aa).

The Sm domain occupies 51 to 132 (LLVYFTTCNI…LVQVIAKDLP (82 aa)). The tract at residues 422–503 (AKSENSSGWP…QSPQSPVFDG (82 aa)) is disordered. Low complexity predominate over residues 431 to 464 (PGSSISRNSENSAASSASNLPILSPSSSGSLSSE). The PAM2-like 1; degenerate motif lies at 467–475 (TLNPNAKEF). The PAM2-like 2 signature appears at 476–486 (KLNPNAKSFKP). Polar residues predominate over residues 486–498 (PSPSATRPQSPQS).

The polypeptide is Polyadenylate-binding protein-interacting protein 3 (CID3) (Arabidopsis thaliana (Mouse-ear cress)).